Consider the following 277-residue polypeptide: MADPWQECMDYAVTLARQAGEVVCEAIKNEMNVMLKSSPVDLVTATDQKVEKMLISSIKEKYPSHSFIGEESVAAGEKSILTDNPTWIIDPIDGTTNFVHRFPFVAVSIGFAVNKKIEFGVVYSCVEGKMYTARKGKGAFCNGQKLQVSQQEDITKSLLVTELGSSRTPETVRIVLSNMEKLFCIPVHGIRSVGTAAVNMCLVATGGADAYYEMGIHCWDVAGAGIIVTEAGGVLMDVTGGPFDLMSRRVIAANNRILAERIAKEIQVIPLQRDDED.

Mg(2+) is bound by residues E70, D90, I92, and D93. E70 serves as a coordination point for substrate. 92–95 provides a ligand contact to substrate; it reads IDGT. T168 is modified (phosphothreonine). Substrate is bound by residues 194–196, E213, and D220; that span reads GTA. D220 is a binding site for Mg(2+).

The protein belongs to the inositol monophosphatase superfamily. Homodimer. Mg(2+) serves as cofactor.

It is found in the cytoplasm. It carries out the reaction a myo-inositol phosphate + H2O = myo-inositol + phosphate. It catalyses the reaction 1D-myo-inositol 1-phosphate + H2O = myo-inositol + phosphate. The enzyme catalyses 1D-myo-inositol 2-phosphate + H2O = myo-inositol + phosphate. The catalysed reaction is 1D-myo-inositol 3-phosphate + H2O = myo-inositol + phosphate. It carries out the reaction 1D-myo-inositol 4-phosphate + H2O = myo-inositol + phosphate. It catalyses the reaction 1D-myo-inositol 5-phosphate + H2O = myo-inositol + phosphate. The enzyme catalyses 1D-myo-inositol 6-phosphate + H2O = myo-inositol + phosphate. The catalysed reaction is scyllo-inositol 1-phosphate + H2O = scyllo-inositol + phosphate. It carries out the reaction alpha-D-galactose 1-phosphate + H2O = D-galactose + phosphate. It catalyses the reaction alpha-D-glucose 1-phosphate + H2O = D-glucose + phosphate. The enzyme catalyses D-glucose 6-phosphate + H2O = D-glucose + phosphate. The catalysed reaction is beta-D-fructose 1-phosphate + H2O = D-fructose + phosphate. It carries out the reaction glycerol 2-phosphate + H2O = glycerol + phosphate. It catalyses the reaction adenosine 2'-phosphate + H2O = adenosine + phosphate. It functions in the pathway polyol metabolism; myo-inositol biosynthesis; myo-inositol from D-glucose 6-phosphate: step 2/2. Its activity is regulated as follows. Inhibited by Li(+), Ca(2+) and Mn(2+), but also by Mg(2+) at concentrations above 3 mM. Phosphatase involved in the dephosphorylation of myo-inositol monophosphate to generate myo-inositol. Is also able to dephosphorylate scyllo-inositol-phosphate, myo-inositol 1,4-diphosphate, scyllo-inositol-1,3-diphosphate and scyllo-inositol-1,4-diphosphate. Also dephosphorylates in vitro other sugar-phosphates including D-galactose-1-phosphate, glucose-1-phosphate, glucose-6-phosphate, fructose-1-phosphate, beta-glycerophosphate and 2'-AMP. Responsible for the provision of inositol required for synthesis of phosphatidylinositol and polyphosphoinositides, and involved in maintaining normal brain function. Has been implicated as the pharmacological target for lithium Li(+) action in brain. The sequence is that of Inositol monophosphatase 1 (IMPA1) from Pongo abelii (Sumatran orangutan).